The primary structure comprises 218 residues: MMSERALTAFYGGTFDPIHYGHLRPVIALARLVNLQRVILLPNNVPPHRPQPVASAQQRLAMARLAIAELPDPIFTLDERELQRPTPSYTVDTFEALRREYGPDSPLAFIIGQDSLLTLTQWHRGLELPALCHLLVCARPGYDYGLADERDNRWLARRLTRDPQALHQQPAGLIYCAATQQLAISASDIRARYREGRACDGLLPPSVQGYIDAQGLYR.

The protein belongs to the NadD family.

It carries out the reaction nicotinate beta-D-ribonucleotide + ATP + H(+) = deamido-NAD(+) + diphosphate. The protein operates within cofactor biosynthesis; NAD(+) biosynthesis; deamido-NAD(+) from nicotinate D-ribonucleotide: step 1/1. Catalyzes the reversible adenylation of nicotinate mononucleotide (NaMN) to nicotinic acid adenine dinucleotide (NaAD). This chain is Probable nicotinate-nucleotide adenylyltransferase, found in Sodalis glossinidius (strain morsitans).